We begin with the raw amino-acid sequence, 189 residues long: dCTP deaminase (189 aa).

DCTP is bound by residues 112–117 (KSTYAR), 136–138 (TLE), Q157, Y171, and Q181. Catalysis depends on E138, which acts as the Proton donor/acceptor.

It belongs to the dCTP deaminase family. Homotrimer.

It catalyses the reaction dCTP + H2O + H(+) = dUTP + NH4(+). The protein operates within pyrimidine metabolism; dUMP biosynthesis; dUMP from dCTP (dUTP route): step 1/2. Functionally, catalyzes the deamination of dCTP to dUTP. This Xanthomonas oryzae pv. oryzae (strain MAFF 311018) protein is dCTP deaminase.